The chain runs to 284 residues: 4-hydroxybenzoate octaprenyltransferase (284 aa).

The next 9 helical transmembrane spans lie at 19-39 (IPIL…SHGL), 42-62 (ISYL…GCII), 85-105 (GQLS…VAFI), 107-127 (VLFL…LAIL), 134-154 (FFAI…FMAF), 165-185 (AWIF…IYAL), 211-231 (ILLF…YCDF), 233-253 (SFFY…YFLY), and 261-281 (CINA…IAVI).

This sequence belongs to the UbiA prenyltransferase family. The cofactor is Mg(2+).

It is found in the cell inner membrane. The catalysed reaction is all-trans-octaprenyl diphosphate + 4-hydroxybenzoate = 4-hydroxy-3-(all-trans-octaprenyl)benzoate + diphosphate. The protein operates within cofactor biosynthesis; ubiquinone biosynthesis. In terms of biological role, catalyzes the prenylation of para-hydroxybenzoate (PHB) with an all-trans polyprenyl group. Mediates the second step in the final reaction sequence of ubiquinone-8 (UQ-8) biosynthesis, which is the condensation of the polyisoprenoid side chain with PHB, generating the first membrane-bound Q intermediate 3-octaprenyl-4-hydroxybenzoate. This is 4-hydroxybenzoate octaprenyltransferase from Francisella tularensis subsp. tularensis (strain FSC 198).